The chain runs to 478 residues: Protein nucleotidyltransferase YdiU (478 aa).

8 residues coordinate ATP: glycine 84, glycine 86, arginine 87, lysine 107, aspartate 119, glycine 120, arginine 170, and arginine 177. Residue aspartate 246 is the Proton acceptor of the active site. The Mg(2+) site is built by asparagine 247 and aspartate 256. Position 256 (aspartate 256) interacts with ATP.

This sequence belongs to the SELO family. Mg(2+) serves as cofactor. The cofactor is Mn(2+).

It carries out the reaction L-seryl-[protein] + ATP = 3-O-(5'-adenylyl)-L-seryl-[protein] + diphosphate. It catalyses the reaction L-threonyl-[protein] + ATP = 3-O-(5'-adenylyl)-L-threonyl-[protein] + diphosphate. The catalysed reaction is L-tyrosyl-[protein] + ATP = O-(5'-adenylyl)-L-tyrosyl-[protein] + diphosphate. The enzyme catalyses L-histidyl-[protein] + UTP = N(tele)-(5'-uridylyl)-L-histidyl-[protein] + diphosphate. It carries out the reaction L-seryl-[protein] + UTP = O-(5'-uridylyl)-L-seryl-[protein] + diphosphate. It catalyses the reaction L-tyrosyl-[protein] + UTP = O-(5'-uridylyl)-L-tyrosyl-[protein] + diphosphate. Functionally, nucleotidyltransferase involved in the post-translational modification of proteins. It can catalyze the addition of adenosine monophosphate (AMP) or uridine monophosphate (UMP) to a protein, resulting in modifications known as AMPylation and UMPylation. The sequence is that of Protein nucleotidyltransferase YdiU from Escherichia coli O157:H7.